The chain runs to 55 residues: uncharacterized protein (55 aa).

Residues 1–25 are disordered; it reads MKNNDKKKEVQRKYREEIKKKKQKN. The helical transmembrane segment at 35–55 threads the bilayer; sequence TIIVVTIIVLFIFFTYTLQGF.

The protein resides in the membrane. This is an uncharacterized protein from Bacillus subtilis (strain 168).